A 210-amino-acid chain; its full sequence is Casparian strip membrane protein 1 (210 aa).

The interval Met1–Leu25 is disordered. Residues Met1–Gly48 are Cytoplasmic-facing. Residues Val49–Ile69 traverse the membrane as a helical segment. Topologically, residues Thr70–Thr98 are extracellular. Residues Phe99–Ile119 form a helical membrane-spanning segment. The Cytoplasmic segment spans residues Val120–Asp138. A helical transmembrane segment spans residues Thr139–Ala159. Residues His160 to Ser183 are Extracellular-facing. Residues Gly184–Ala204 form a helical membrane-spanning segment. Topologically, residues Ser205–His210 are cytoplasmic.

It belongs to the Casparian strip membrane proteins (CASP) family. As to quaternary structure, homodimer and heterodimers.

The protein localises to the cell membrane. In terms of biological role, regulates membrane-cell wall junctions and localized cell wall deposition. Required for establishment of the Casparian strip membrane domain (CSD) and the subsequent formation of Casparian strips, a cell wall modification of the root endodermis that determines an apoplastic barrier between the intraorganismal apoplasm and the extraorganismal apoplasm and prevents lateral diffusion. In Erythranthe guttata (Yellow monkey flower), this protein is Casparian strip membrane protein 1.